Here is a 156-residue protein sequence, read N- to C-terminus: Small ribosomal subunit protein uS7 (156 aa).

This sequence belongs to the universal ribosomal protein uS7 family. As to quaternary structure, part of the 30S ribosomal subunit. Contacts proteins S9 and S11.

Its function is as follows. One of the primary rRNA binding proteins, it binds directly to 16S rRNA where it nucleates assembly of the head domain of the 30S subunit. Is located at the subunit interface close to the decoding center, probably blocks exit of the E-site tRNA. The polypeptide is Small ribosomal subunit protein uS7 (Prochlorococcus marinus (strain SARG / CCMP1375 / SS120)).